A 144-amino-acid chain; its full sequence is Large ribosomal subunit protein uL16 (144 aa).

Residues 1–17 (MLQPKKTKFRRQQKGRA) are compositionally biased toward basic residues. Positions 1–22 (MLQPKKTKFRRQQKGRAKGNAQ) are disordered.

Belongs to the universal ribosomal protein uL16 family. As to quaternary structure, part of the 50S ribosomal subunit.

In terms of biological role, binds 23S rRNA and is also seen to make contacts with the A and possibly P site tRNAs. The sequence is that of Large ribosomal subunit protein uL16 from Bacteroides fragilis (strain ATCC 25285 / DSM 2151 / CCUG 4856 / JCM 11019 / LMG 10263 / NCTC 9343 / Onslow / VPI 2553 / EN-2).